The following is a 284-amino-acid chain: uncharacterized protein (284 aa).

This is an uncharacterized protein from Streptomyces fradiae (Streptomyces roseoflavus).